The following is a 230-amino-acid chain: Bidirectional sugar transporter SWEET2b (230 aa).

Residues 1–6 lie on the Extracellular side of the membrane; it reads MDSLYD. Residues 7–27 traverse the membrane as a helical segment; that stretch reads ISCFAAGLAGNIFALALFLSP. The MtN3/slv 1 domain occupies 13–98; that stretch reads GLAGNIFALA…CLFIFYADSR (86 aa). At 28–45 the chain is on the cytoplasmic side; sequence VTTFKRILKAKSTERFDG. Residues 46 to 66 traverse the membrane as a helical segment; sequence LPYLFSLLNCLICLWYGLPWV. Topologically, residues 67–72 are extracellular; it reads ADGRLL. A helical transmembrane segment spans residues 73-93; it reads VATVNGIGAVFQLAYICLFIF. The Cytoplasmic portion of the chain corresponds to 94–103; it reads YADSRKTRMK. A helical membrane pass occupies residues 104–124; that stretch reads IIGLLVLVVCGFALVSHASVF. At 125–137 the chain is on the extracellular side; the sequence is FFDQPLRQQFVGA. Positions 133 to 217 constitute a MtN3/slv 2 domain; the sequence is QFVGAVSMAS…LALYAYYSRK (85 aa). The chain crosses the membrane as a helical span at residues 138-158; the sequence is VSMASLISMFASPLAVMGVVI. Residues 159-167 are Cytoplasmic-facing; the sequence is RSESVEFMP. A helical transmembrane segment spans residues 168-188; that stretch reads FYLSLSTFLMSASFALYGLLL. Residues 189-190 lie on the Extracellular side of the membrane; sequence RD. Residues 191–211 traverse the membrane as a helical segment; the sequence is FFIYFPNGLGLILGAMQLALY. Residues 212–230 lie on the Cytoplasmic side of the membrane; the sequence is AYYSRKWRGQDSSAPLLLA.

The protein belongs to the SWEET sugar transporter family. In terms of assembly, forms homooligomers and/or heterooligomers.

It is found in the cell membrane. Its function is as follows. Mediates both low-affinity uptake and efflux of sugar across the plasma membrane. This Oryza sativa subsp. indica (Rice) protein is Bidirectional sugar transporter SWEET2b (SWEET2B).